The chain runs to 516 residues: Putative protein NRT1/ PTR FAMILY 2.2 (516 aa).

The next 11 membrane-spanning stretches (helical) occupy residues 31 to 51, 67 to 87, 90 to 110, 138 to 158, 174 to 194, 201 to 221, 320 to 340, 362 to 382, 394 to 414, 437 to 457, and 476 to 496; these read TLLG…VFLI, IVNG…DSFF, IPVI…LTMI, ILYI…FTLA, FFNW…TAIV, SWKL…IVFV, LLLA…LIIL, VIVI…VYPM, LQKV…SAIV, FIAS…ITLI, and VYWL…AWFY.

This sequence belongs to the major facilitator superfamily. Proton-dependent oligopeptide transporter (POT/PTR) (TC 2.A.17) family. As to expression, not detected.

The protein resides in the membrane. In terms of biological role, transporter involved in a passive nitrate efflux. The protein is Putative protein NRT1/ PTR FAMILY 2.2 (NPF2.2) of Arabidopsis thaliana (Mouse-ear cress).